Consider the following 275-residue polypeptide: Exosome complex component Rrp42 (275 aa).

It belongs to the RNase PH family. Rrp42 subfamily. As to quaternary structure, component of the archaeal exosome complex. Forms a hexameric ring-like arrangement composed of 3 Rrp41-Rrp42 heterodimers. The hexameric ring associates with a trimer of Rrp4 and/or Csl4 subunits.

The protein localises to the cytoplasm. In terms of biological role, non-catalytic component of the exosome, which is a complex involved in RNA degradation. Contributes to the structuring of the Rrp41 active site. This Saccharolobus islandicus (strain L.S.2.15 / Lassen #1) (Sulfolobus islandicus) protein is Exosome complex component Rrp42.